Reading from the N-terminus, the 467-residue chain is Indoleacetamide hydrolase (467 aa).

Residues lysine 74 and serine 149 each act as charge relay system in the active site. Catalysis depends on serine 173, which acts as the Acyl-ester intermediate.

It belongs to the amidase family.

Its pathway is plant hormone metabolism; auxin biosynthesis. In terms of biological role, hydrolyzes indole-3-acetamide (IAM) into indole-3-acetic acid (IAA). This is Indoleacetamide hydrolase (tms2) from Rhizobium radiobacter (Agrobacterium tumefaciens).